Reading from the N-terminus, the 724-residue chain is MDGNNSNSQGKCPVMHGGNTASEGDVMAWWPRALNLEILHQKDTKPNPMGDGPSYHEALKSLDFDALKTDMHALLTDSQDWWPADYGHYGGLMIRLAWHSAGSYRLADGRGGGGSGNIRFAPLNSWPDNGNLDKARRLLWPLKKKYGNKISWADLILLAGTIAYENMGLKTFGFGFGREDIWGPEIDTYWGAEKEWLAPSDTRYEDVAKPDTMENPLAAVQMGLIYVNPEGVNGKPDPLKTAAQVRTTFARMAMNDEETAALTAGGHTVGKTHGNGDAGALGPEPEGAELENQGFGWVNPNLGGKASNAVTSGLEGAWTTNPTQFDMGYFELLFGYEWELKKSPAGAQQWQPINIKPEHMPVDASDPSQRRMPIMTDADMAMKMDPAYRAICEKFMADPAYFKDTFARAWFKLTHRDMGPKDCYFGPDVPSEELVWQDPVPAGPTGYDVARVKSAIAASGLSIAEMVATAWDSARTFRGSDKRGGANGARIRLAPQKDWDGNEPDRLAKVLGVLEPIARDAGASLADVIVLAGNVGIEQAARAAGHDVAVPFSPGRGDATDAMTDAESFDVLEPLADGYRNWQKADYVVSAEEMLLDRTQLLGLTAPEMTVLVGGMRVLGTNYGGTKHGVFTDREGALTTDFFVNLTDMAYSWVPVDRRTYEIRDRKTGKARWTATRADLVFGSNSILRAYAEVYAQDDNAGKFVADFVAAWTKVMNADRFDLA.

The tryptophyl-tyrosyl-methioninium (Trp-Tyr) (with M-252) cross-link spans 98–226 (WHSAGSYRLA…LAAVQMGLIY (129 aa)). The active-site Proton acceptor is His99. Residues 226–252 (YVNPEGVNGKPDPLKTAAQVRTTFARM) constitute a cross-link (tryptophyl-tyrosyl-methioninium (Tyr-Met) (with W-98)). His267 contacts heme b.

The protein belongs to the peroxidase family. Peroxidase/catalase subfamily. As to quaternary structure, homodimer or homotetramer. Heme b is required as a cofactor. Post-translationally, formation of the three residue Trp-Tyr-Met cross-link is important for the catalase, but not the peroxidase activity of the enzyme.

The catalysed reaction is H2O2 + AH2 = A + 2 H2O. It carries out the reaction 2 H2O2 = O2 + 2 H2O. Functionally, bifunctional enzyme with both catalase and broad-spectrum peroxidase activity. This Maricaulis maris (strain MCS10) (Caulobacter maris) protein is Catalase-peroxidase.